Consider the following 464-residue polypeptide: ATP synthase subunit beta (464 aa).

152–159 contributes to the ATP binding site; sequence GGAGVGKT.

It belongs to the ATPase alpha/beta chains family. In terms of assembly, F-type ATPases have 2 components, CF(1) - the catalytic core - and CF(0) - the membrane proton channel. CF(1) has five subunits: alpha(3), beta(3), gamma(1), delta(1), epsilon(1). CF(0) has three main subunits: a(1), b(2) and c(9-12). The alpha and beta chains form an alternating ring which encloses part of the gamma chain. CF(1) is attached to CF(0) by a central stalk formed by the gamma and epsilon chains, while a peripheral stalk is formed by the delta and b chains.

It localises to the cell membrane. The catalysed reaction is ATP + H2O + 4 H(+)(in) = ADP + phosphate + 5 H(+)(out). Produces ATP from ADP in the presence of a proton gradient across the membrane. The catalytic sites are hosted primarily by the beta subunits. In Ureaplasma urealyticum serovar 10 (strain ATCC 33699 / Western), this protein is ATP synthase subunit beta.